Here is a 617-residue protein sequence, read N- to C-terminus: Dihydroxy-acid dehydratase (617 aa).

Asp-81 contributes to the Mg(2+) binding site. Cys-122 provides a ligand contact to [2Fe-2S] cluster. Mg(2+) contacts are provided by Asp-123 and Lys-124. Lys-124 is subject to N6-carboxylysine. Cys-195 lines the [2Fe-2S] cluster pocket. Glu-491 provides a ligand contact to Mg(2+). Ser-517 serves as the catalytic Proton acceptor.

This sequence belongs to the IlvD/Edd family. As to quaternary structure, homodimer. It depends on [2Fe-2S] cluster as a cofactor. Mg(2+) is required as a cofactor.

The enzyme catalyses (2R)-2,3-dihydroxy-3-methylbutanoate = 3-methyl-2-oxobutanoate + H2O. It catalyses the reaction (2R,3R)-2,3-dihydroxy-3-methylpentanoate = (S)-3-methyl-2-oxopentanoate + H2O. It functions in the pathway amino-acid biosynthesis; L-isoleucine biosynthesis; L-isoleucine from 2-oxobutanoate: step 3/4. It participates in amino-acid biosynthesis; L-valine biosynthesis; L-valine from pyruvate: step 3/4. In terms of biological role, functions in the biosynthesis of branched-chain amino acids. Catalyzes the dehydration of (2R,3R)-2,3-dihydroxy-3-methylpentanoate (2,3-dihydroxy-3-methylvalerate) into 2-oxo-3-methylpentanoate (2-oxo-3-methylvalerate) and of (2R)-2,3-dihydroxy-3-methylbutanoate (2,3-dihydroxyisovalerate) into 2-oxo-3-methylbutanoate (2-oxoisovalerate), the penultimate precursor to L-isoleucine and L-valine, respectively. The chain is Dihydroxy-acid dehydratase from Nitrosococcus oceani (strain ATCC 19707 / BCRC 17464 / JCM 30415 / NCIMB 11848 / C-107).